The sequence spans 328 residues: Phenylalanine--tRNA ligase alpha subunit (328 aa).

Glu253 provides a ligand contact to Mg(2+).

Belongs to the class-II aminoacyl-tRNA synthetase family. Phe-tRNA synthetase alpha subunit type 1 subfamily. In terms of assembly, tetramer of two alpha and two beta subunits. The cofactor is Mg(2+).

Its subcellular location is the cytoplasm. The catalysed reaction is tRNA(Phe) + L-phenylalanine + ATP = L-phenylalanyl-tRNA(Phe) + AMP + diphosphate + H(+). This chain is Phenylalanine--tRNA ligase alpha subunit, found in Coxiella burnetii (strain CbuG_Q212) (Coxiella burnetii (strain Q212)).